The following is a 92-amino-acid chain: Alpha-defensin 25 (92 aa).

The first 19 residues, 1-19 (MKTLVLLSALALLAFQVQA), serve as a signal peptide directing secretion. Positions 20–57 (DPIQNRDEESKIDEQPGKEDQAVSVSFGDPEGSSLQEE) are excised as a propeptide. Residues 24 to 40 (NRDEESKIDEQPGKEDQ) are compositionally biased toward basic and acidic residues. The segment at 24–53 (NRDEESKIDEQPGKEDQAVSVSFGDPEGSS) is disordered. 3 disulfide bridges follow: C63-C92, C65-C80, and C70-C91.

This sequence belongs to the alpha-defensin family.

It localises to the secreted. In terms of biological role, may have microbicidal activities. This is Alpha-defensin 25 (Defa25) from Mus musculus (Mouse).